The primary structure comprises 781 residues: MWGLVRLLLAWLGGWGCMGRLAAPVPAWAGSRGHSGPTLLRTRRSWVWNQFFVIEEYSGPEPVLIGKLHSDVDRGEGRTKYLLTGEGAGTVFVIDEATGNIHVTKSLDREEKAQYVLLAQAVDRASNRPLEPPSEFIIKVQDINDNPPVFPLGPYHATVPEMSNVGTSVIQVTAHDADDPSYGNSAKLVYTVLDGLPFFSVDPQTGVVRTAIPNMDRETQEEFLVVIQAKDMGGHMGGLSGSTTVTVTLSDVNDNPPKFPQSLYQFSVVETAGPGTLVGRLKAQDPDLGDNALVAYSILNGEGSEVFSISTDSQGQDGLLTVRKPLDFETRRSYTFRVEATNTLIDPAYLRRGPFKDVASVRVTVQDAPEPPAFTQATYHLAVPENKAPGTLVGQISASDLDSPASPIRYSILPHSDPERCFSIEPEDGTIRTAVRLDREARVWHNLTILATELDSSAQSSRVQVAIQTLDENDNAPQLAEPYDIFVCDSAAPGQLIKVIRALDRDEVGNSSQVSLQGPVGPDANFTVRDNRDGSASLLLPSRPAPPRQAPYLIPIELWDWGQPALSSTATVTVSVCRCRPDGSMASCWPEAQLSPTGLSTGALLAIVTCMGTLLALVVLFVALRRQKQEALMVLEEEDVRENIITYDDEGGGEEDTEAFDITALQNPDGAAPPAAGPPVRRDVLPRTRAPRQPRPPGPADVVQLLALRLREADEDPSVPPYDSVQVYGYEGRGSSCGSLSSLGSGSEAGGVPGPAEPLDDWGPLFRTLAELYGAKEPPAP.

The signal sequence occupies residues 1–22 (MWGLVRLLLAWLGGWGCMGRLA). A propeptide spanning residues 23–44 (APVPAWAGSRGHSGPTLLRTRR) is cleaved from the precursor. The Extracellular portion of the chain corresponds to 45–603 (SWVWNQFFVI…LSPTGLSTGA (559 aa)). Cadherin domains follow at residues 46 to 150 (WVWN…PPVF), 151 to 259 (PLGP…PPKF), 260 to 374 (PQSL…PPAF), 375 to 479 (TQAT…APQL), and 479 to 592 (LAEP…WPEA). Asn-446, Asn-510, and Asn-525 each carry an N-linked (GlcNAc...) asparagine glycan. A helical membrane pass occupies residues 604–624 (LLAIVTCMGTLLALVVLFVAL). Over 625-781 (RRQKQEALMV…LYGAKEPPAP (157 aa)) the chain is Cytoplasmic. 2 disordered regions span residues 665 to 700 (LQNP…PGPA) and 731 to 762 (EGRG…LDDW). A compositionally biased stretch (low complexity) spans 733 to 746 (RGSSCGSLSSLGSG).

Associates with alpha-, beta- and delta-catenins.

It localises to the cell membrane. Its function is as follows. Cadherins are calcium-dependent cell adhesion proteins. They preferentially interact with themselves in a homophilic manner in connecting cells; cadherins may thus contribute to the sorting of heterogeneous cell types. Cadherin-24 mediate strong cell-cell adhesion. This is Cadherin-24 (Cdh24) from Mus musculus (Mouse).